Here is a 309-residue protein sequence, read N- to C-terminus: Sodium/potassium-transporting ATPase subunit beta-1 (309 aa).

Residues 1 to 45 (MSKNNGKGAKGEFEFPQPAKKQTFSEMIYNPQEGTFFGRTGKSWS) are Cytoplasmic-facing. A helical; Signal-anchor for type II membrane protein membrane pass occupies residues 46–66 (QLLLFYTIFYIVLAALFTICM). The Extracellular portion of the chain corresponds to 67–309 (QGLLSTISDT…GSVTFQILLD (243 aa)). An N-linked (GlcNAc...) asparagine glycan is attached at Asn-133. Intrachain disulfides connect Cys-143–Cys-155 and Cys-165–Cys-179. N-linked (GlcNAc...) asparagine glycosylation is present at Asn-211. A disulfide bridge links Cys-225 with Cys-282.

This sequence belongs to the X(+)/potassium ATPases subunit beta family. In terms of assembly, the sodium/potassium-transporting ATPase is composed of a catalytic alpha subunit, an auxiliary non-catalytic beta subunit and an additional regulatory subunit. Interacts with nkain. As to expression, in embryos, it is expressed in the neurons of the CNS and PNS, in Garland cells and posterior spiracles. In adults, it is concentrated in the thorax and abdomen (muscle tissue, digestive system and Malpighian tubules) and weakly expressed in the head. Expression is diffuse in the nervous system.

The protein localises to the cell membrane. This is the non-catalytic component of the active enzyme, which catalyzes the hydrolysis of ATP coupled with the exchange of Na(+) and K(+) ions across the plasma membrane. The beta subunit regulates, through assembly of alpha/beta heterodimers, the number of sodium pumps transported to the plasma membrane. The polypeptide is Sodium/potassium-transporting ATPase subunit beta-1 (nrv1) (Drosophila melanogaster (Fruit fly)).